A 557-amino-acid polypeptide reads, in one-letter code: NADH-quinone oxidoreductase subunit C/D (557 aa).

Residues 1–13 are compositionally biased toward acidic residues; sequence MSLEEQQSDDPAE. The disordered stretch occupies residues 1–20; sequence MSLEEQQSDDPAELESGVSR. Residues 1 to 174 form an NADH dehydrogenase I subunit C region; the sequence is MSLEEQQSDD…ATLREHANPL (174 aa). The segment at 184-557 is NADH dehydrogenase I subunit D; sequence NTMYINIGPH…LDIVLGEVDR (374 aa). K517 participates in a covalent cross-link: Glycyl lysine isopeptide (Lys-Gly) (interchain with G-Cter in SAMP2).

The protein in the N-terminal section; belongs to the complex I 30 kDa subunit family. In the C-terminal section; belongs to the complex I 49 kDa subunit family. In terms of assembly, NDH-1 is composed of 13 different subunits. Subunits NuoB, CD, E, F, and G constitute the peripheral sector of the complex.

The protein localises to the cell membrane. The catalysed reaction is a quinone + NADH + 5 H(+)(in) = a quinol + NAD(+) + 4 H(+)(out). In terms of biological role, NDH-1 shuttles electrons from NADH, via FMN and iron-sulfur (Fe-S) centers, to quinones in the respiratory chain. Couples the redox reaction to proton translocation (for every two electrons transferred, four hydrogen ions are translocated across the cytoplasmic membrane), and thus conserves the redox energy in a proton gradient. The polypeptide is NADH-quinone oxidoreductase subunit C/D (nuoCD) (Haloferax volcanii (strain ATCC 29605 / DSM 3757 / JCM 8879 / NBRC 14742 / NCIMB 2012 / VKM B-1768 / DS2) (Halobacterium volcanii)).